A 701-amino-acid polypeptide reads, in one-letter code: Elongation factor G (701 aa).

One can recognise a tr-type G domain in the interval Glu-8–Thr-290. GTP is bound by residues Ala-17–Thr-24, Asp-88–His-92, and Asn-142–Asp-145.

The protein belongs to the TRAFAC class translation factor GTPase superfamily. Classic translation factor GTPase family. EF-G/EF-2 subfamily.

The protein resides in the cytoplasm. Catalyzes the GTP-dependent ribosomal translocation step during translation elongation. During this step, the ribosome changes from the pre-translocational (PRE) to the post-translocational (POST) state as the newly formed A-site-bound peptidyl-tRNA and P-site-bound deacylated tRNA move to the P and E sites, respectively. Catalyzes the coordinated movement of the two tRNA molecules, the mRNA and conformational changes in the ribosome. The sequence is that of Elongation factor G from Aeromonas salmonicida (strain A449).